The chain runs to 165 residues: Protein-export protein SecB (165 aa).

Belongs to the SecB family. As to quaternary structure, homotetramer, a dimer of dimers. One homotetramer interacts with 1 SecA dimer.

The protein localises to the cytoplasm. Its function is as follows. One of the proteins required for the normal export of preproteins out of the cell cytoplasm. It is a molecular chaperone that binds to a subset of precursor proteins, maintaining them in a translocation-competent state. It also specifically binds to its receptor SecA. In Marinobacter nauticus (strain ATCC 700491 / DSM 11845 / VT8) (Marinobacter aquaeolei), this protein is Protein-export protein SecB.